Here is a 217-residue protein sequence, read N- to C-terminus: Zinc finger CCHC-type and RNA-binding motif-containing protein 1 (217 aa).

Positions 10–88 (STVYVSNLPF…RVIKASIAID (79 aa)) constitute an RRM domain. The segment at 105–122 (SKCYECGESGHLSYACPK) adopts a CCHC-type zinc-finger fold. The interval 120-217 (CPKNMLGERE…YFSDEEELSD (98 aa)) is disordered. Residues 145 to 163 (PEEEIEEVEESEDEGEDPA) are compositionally biased toward acidic residues. Residues Ser155, Ser210, and Ser216 each carry the phosphoserine modification.

In terms of assembly, component of the U11/U12 snRNPs that are part of the U12-type spliceosome.

The protein localises to the nucleus. Its subcellular location is the nucleoplasm. In Homo sapiens (Human), this protein is Zinc finger CCHC-type and RNA-binding motif-containing protein 1 (ZCRB1).